The following is a 189-amino-acid chain: Cytochrome b6-f complex subunit 4 (189 aa).

Transmembrane regions (helical) follow at residues leucine 36–valine 56, leucine 103–glutamate 123, and threonine 139–isoleucine 159.

Belongs to the cytochrome b family. PetD subfamily. In terms of assembly, the 4 large subunits of the cytochrome b6-f complex are cytochrome b6, subunit IV (17 kDa polypeptide, petD), cytochrome f and the Rieske protein, while the 4 small subunits are petG, petL, petM and petN. The complex functions as a dimer.

The protein localises to the plastid. It is found in the chloroplast thylakoid membrane. Its function is as follows. Component of the cytochrome b6-f complex, which mediates electron transfer between photosystem II (PSII) and photosystem I (PSI), cyclic electron flow around PSI, and state transitions. This is Cytochrome b6-f complex subunit 4 from Pinus koraiensis (Korean pine).